Reading from the N-terminus, the 2228-residue chain is Genome polyprotein (2228 aa).

A disordered region spans residues 55 to 76; sequence TAEVGSHQPEPLKTSVDKPGSK. 2 consecutive short sequence motifs ((L)YPX(n)L motif) follow at residues 167-171 and 200-205; these read YPHGL and YPVWEL. The interval 766-836 is involved in P1-2A pentamerization; that stretch reads MMDRIALGDL…PRKIKGVFSQ (71 aa). Residues 1011–1031 traverse the membrane as a helical segment; it reads TVEIINTVLCFVKSGILLYVI. The interval 1043–1070 is membrane-penetrating ability; that stretch reads IGLLRVMNYADIGCSVISCGKVFSKMLE. A coiled-coil region spans residues 1127 to 1153; sequence NKKDVLNILKDHQQKIERAIEEADNFC. The 163-residue stretch at 1204 to 1366 folds into the SF3 helicase domain; the sequence is HQKLKNLGSI…SFFKNPHNDM (163 aa). Residue 1230–1237 participates in ATP binding; sequence GKRGGGKS. A helical transmembrane segment spans residues 1462 to 1482; sequence WVAVGAAVGVLGVLVGGWYVY. Residue Tyr1499 is modified to O-(5'-phospho-RNA)-tyrosine. The Peptidase C3 domain occupies 1514–1728; it reads DPVESQSTLE…VAKLVTQEMF (215 aa). Catalysis depends on for protease 3C activity residues His1563, Asp1603, and Cys1691. One can recognise a RdRp catalytic domain in the interval 1977–2098; it reads DVGLDLDFSA…VFSRQVQIDN (122 aa).

This sequence belongs to the picornaviridae polyprotein family. In terms of assembly, homodimer. Homomultimer; probably interacts with membranes in a multimeric form. Seems to assemble into amyloid-like fibers. As to quaternary structure, homodimer. Monomer. Interacts with protein 3CD. Interacts with host ACBD3. In terms of assembly, interacts with protein 3AB. As to quaternary structure, interacts with human MAVS. Homodimer; disulfide-linked. In terms of assembly, homopentamer. Homooligomer. As to quaternary structure, interacts with capsid protein VP2. Interacts with capsid protein VP3. Interacts with capsid protein VP1. Interacts with capsid protein VP3. In terms of assembly, interacts with capsid protein VP1. Interacts with capsid protein VP2. Specific enzymatic cleavages by viral protease in vivo yield a variety of precursors and mature proteins. Polyprotein processing intermediates are produced, such as P1-2A which is a functional precursor of the structural proteins, VP0 which is a VP4-VP2 precursor, VP1-2A precursor, 3ABC precursor which is a stable and catalytically active precursor of 3A, 3B and 3C proteins, 3AB and 3CD precursors. The assembly signal 2A is removed from VP1-2A by a host protease, possibly host Cathepsin L. This cleavage occurs over a region of 3 amino-acids probably generating VP1 proteins with heterogeneous C-termini. In terms of processing, during virion maturation, immature virions are rendered infectious following cleavage of VP0 into VP4 and VP2. This maturation seems to be an autocatalytic event triggered by the presence of RNA in the capsid and is followed by a conformational change of the particle. Post-translationally, the assembly signal 2A is removed from VP1-2A by a host protease, possibly host Cathepsin L in naked virions. This cleavage does not occur in enveloped virions. This cleavage occurs over a region of 3 amino-acids probably generating VP1 proteins with heterogeneous C-termini. VPg is uridylylated prior to priming replication into VPg-pUpU. In terms of processing, unlike other picornaviruses, does not seem to be myristoylated.

Its subcellular location is the virion. The protein localises to the host endosome. It is found in the host multivesicular body. The protein resides in the host membrane. It localises to the host mitochondrion outer membrane. Its subcellular location is the host cytoplasm. The protein localises to the host cytoplasmic vesicle membrane. The catalysed reaction is RNA(n) + a ribonucleoside 5'-triphosphate = RNA(n+1) + diphosphate. The enzyme catalyses a ribonucleoside 5'-triphosphate + H2O = a ribonucleoside 5'-diphosphate + phosphate + H(+). It carries out the reaction Selective cleavage of Gln-|-Gly bond in the poliovirus polyprotein. In other picornavirus reactions Glu may be substituted for Gln, and Ser or Thr for Gly.. In terms of biological role, capsid proteins VP1, VP2, and VP3 form a closed capsid enclosing the viral positive strand RNA genome. All these proteins contain a beta-sheet structure called beta-barrel jelly roll. Together they form an icosahedral capsid (T=3) composed of 60 copies of each VP1, VP2, and VP3, with a diameter of approximately 300 Angstroms. VP1 is situated at the 12 fivefold axes, whereas VP2 and VP3 are located at the quasi-sixfold axes. The naked capsid interacts with the host receptor HAVCR1 to provide virion attachment to and probably entry into the target cell. Its function is as follows. VP0 precursor is a component of the immature procapsids. Plays a role in the assembly of the 12 pentamers into an icosahedral structure. Has not been detected in mature virions, supposedly owing to its small size. Functionally, precursor component of immature procapsids that corresponds to an extended form of the structural protein VP1. After maturation, possibly by the host Cathepsin L, the assembly signal 2A is cleaved to give rise to the mature VP1 protein. In terms of biological role, functions as a viroporin. Affects membrane integrity and causes an increase in membrane permeability. Involved in host intracellular membrane rearrangements probably to give rise to the viral factories. Does not disrupt calcium homeostasis or glycoprotein trafficking. Antagonizes the innate immune response of the host by suppressing IFN-beta synthesis, which it achieves by interfering with the RIG-I/IFIH1 pathway. Its function is as follows. Affects membrane integrity and causes an increase in membrane permeability. Associates with and induces structural rearrangements of intracellular membranes. Displays RNA-binding activity. Functionally, the precursor 3ABC is targeted to the mitochondrial membrane where protease 3C activity cleaves and inhibits the host antiviral protein MAVS, thereby disrupting activation of IRF3 through the IFIH1/MDA5 pathway. In vivo, the protease activity of 3ABC precursor is more efficient in cleaving the 2BC precursor than that of protein 3C. The 3ABC precursor may therefore play a role in the proteolytic processing of the polyprotein. Possible viroporin. In terms of biological role, interacts with the 3CD precursor and with RNA structures found at both the 5'- and 3'-termini of the viral genome. Since the 3AB precursor contains the hydrophobic domain 3A, it probably anchors the whole viral replicase complex to intracellular membranes on which viral RNA synthesis occurs. Its function is as follows. May serve as membrane anchor to the 3AB and 3ABC precursors via its hydrophobic domain. May interact with RNA. Acts as a primer for viral RNA replication and remains covalently bound to viral genomic RNA. VPg is uridylylated prior to priming replication into VPg-pUpU. The VPg-pUpU is then used as primer on the genomic RNA poly(A) by the RNA-dependent RNA polymerase to replicate the viral genome. Functionally, cysteine protease that generates mature viral proteins from the precursor polyprotein. In addition to its proteolytic activity, it binds to viral RNA, and thus influences viral genome replication. RNA and substrate bind cooperatively to the protease. Cleaves IKBKG/NEMO to impair innate immune signaling. Cleaves host PABPC1 which may participate in the switch of viral translation to RNA synthesis. In terms of biological role, interacts with the 3AB precursor and with RNA structures found at both the 5'- and 3'-termini of the viral genome. Disrupts TLR3 signaling by degrading the host adapter protein TICAM1/TRIF. Its function is as follows. RNA-directed RNA polymerase 3D-POL replicates genomic and antigenomic RNA by recognizing replications specific signals. The chain is Genome polyprotein from Human hepatitis A virus genotype IIIA (isolate NOR-21) (HHAV).